The chain runs to 382 residues: MGDWSALGKLLDKVQAYSTAGGKVWLSVLFIFRILLLGTAVESAWGDEQSAFRCNTQQPGCENVCYDKSFPISHVRFWVLQIIFVSVPTLLYLAHVFYVMRKEEKLNKKEEELKVAQTDGVNVEMHLKQIEIKKFKYGIEEHGKVKMRGGLLRTYIISILFKSVFEVAFLLIQWYIYGFSLSAVYTCKRDPCPHQVDCFLSRPTEKTIFIIFMLVVSLVSLALNIIELFYVFFKGVKDRVKGKSDPYHATTGPLSPSKDCGSPKYAYFNGCSSPTAPLSPMSPPGYKLVTGDRNNSSCRNYNKQASEQNWANYSAEQNRMGQAGSTISNSHAQPFDFPDDNQNSKKLAAGHELQPLAIVDQRPSSRASSRASSRPRPDDLEI.

The Cytoplasmic portion of the chain corresponds to 2 to 23; that stretch reads GDWSALGKLLDKVQAYSTAGGK. Ser5 bears the Phosphoserine mark. The chain crosses the membrane as a helical span at residues 24 to 44; it reads VWLSVLFIFRILLLGTAVESA. Over 45 to 76 the chain is Extracellular; sequence WGDEQSAFRCNTQQPGCENVCYDKSFPISHVR. Intrachain disulfides connect Cys54/Cys192 and Cys187/Cys198. A helical membrane pass occupies residues 77-97; sequence FWVLQIIFVSVPTLLYLAHVF. Over 98–155 the chain is Cytoplasmic; the sequence is YVMRKEEKLNKKEEELKVAQTDGVNVEMHLKQIEIKKFKYGIEEHGKVKMRGGLLRTY. Lys144 is covalently cross-linked (Glycyl lysine isopeptide (Lys-Gly) (interchain with G-Cter in SUMO)). Residues 156–176 traverse the membrane as a helical segment; it reads IISILFKSVFEVAFLLIQWYI. Over 177–207 the chain is Extracellular; sequence YGFSLSAVYTCKRDPCPHQVDCFLSRPTEKT. Residues 208-228 form a helical membrane-spanning segment; sequence IFIIFMLVVSLVSLALNIIEL. Topologically, residues 229–382 are cytoplasmic; the sequence is FYVFFKGVKD…SRPRPDDLEI (154 aa). Lys237 is covalently cross-linked (Glycyl lysine isopeptide (Lys-Gly) (interchain with G-Cter in SUMO)). Residues 244–382 form an interaction with NOV region; that stretch reads SDPYHATTGP…SRPRPDDLEI (139 aa). A Phosphotyrosine modification is found at Tyr247. Ser255, Ser257, and Ser262 each carry phosphoserine. The interaction with UBQLN4 stretch occupies residues 264–382; sequence KYAYFNGCSS…SRPRPDDLEI (119 aa). Cys271 carries the S-nitrosocysteine modification. Position 275 is a phosphothreonine (Thr275). A phosphoserine mark is found at Ser306 and Ser314. The segment covering 317–332 has biased composition (polar residues); it reads QNRMGQAGSTISNSHA. The disordered stretch occupies residues 317-382; it reads QNRMGQAGST…SRPRPDDLEI (66 aa). At Ser325 the chain carries Phosphoserine; by CK1. Thr326 is subject to Phosphothreonine. A phosphoserine; by CK1 mark is found at Ser328 and Ser330. Residues Ser344 and Ser365 each carry the phosphoserine modification. The span at 362-374 shows a compositional bias: low complexity; the sequence is RPSSRASSRASSR. A Phosphoserine; by PKC/PRKCG and PKC/PRKCD modification is found at Ser368. Phosphoserine is present on residues Ser369 and Ser373.

It belongs to the connexin family. Alpha-type (group II) subfamily. As to quaternary structure, a connexon is composed of a hexamer of connexins. Interacts with SGSM3. Interacts with RIC1/CIP150. Interacts with CNST and CSNK1D. Interacts (via C-terminus) with TJP1. Interacts (via C-terminus) with SRC (via SH3 domain). Interacts (not ubiquitinated) with UBQLN4 (via UBA domain). Interacts with NOV. Interacts with TMEM65. Interacts with ANK3/ANKG and PKP2. Phosphorylation at Ser-325, Ser-328 and Ser-330 by CK1 modulates gap junction assembly. Phosphorylated at Ser-368 by PRKCG; phosphorylation induces disassembly of gap junction plaques and inhibition of gap junction activity. Phosphorylation at Ser-368 by PRKCD triggers its internalization into small vesicles leading to proteasome-mediated degradation. In terms of processing, sumoylated with SUMO1, SUMO2 and SUMO3, which may regulate the level of functional Cx43 gap junctions at the plasma membrane. May be desumoylated by SENP1 or SENP2. Post-translationally, S-nitrosylation at Cys-271 is enriched at the muscle endothelial gap junction in arteries, it augments channel permeability and may regulate of smooth muscle cell to endothelial cell communication. Acetylated in the developing cortex; leading to delocalization from the cell membrane.

Its subcellular location is the cell membrane. It is found in the cell junction. The protein resides in the gap junction. It localises to the endoplasmic reticulum. Gap junction protein that acts as a regulator of bladder capacity. A gap junction consists of a cluster of closely packed pairs of transmembrane channels, the connexons, through which materials of low MW diffuse from one cell to a neighboring cell. May play a critical role in the physiology of hearing by participating in the recycling of potassium to the cochlear endolymph. Negative regulator of bladder functional capacity: acts by enhancing intercellular electrical and chemical transmission, thus sensitizing bladder muscles to cholinergic neural stimuli and causing them to contract. May play a role in cell growth inhibition through the regulation of NOV expression and localization. Plays an essential role in gap junction communication in the ventricles. This chain is Gap junction alpha-1 protein (GJA1), found in Oryctolagus cuniculus (Rabbit).